A 92-amino-acid polypeptide reads, in one-letter code: Small ribosomal subunit protein uS19c (92 aa).

Belongs to the universal ribosomal protein uS19 family.

It is found in the plastid. Functionally, protein S19 forms a complex with S13 that binds strongly to the 16S ribosomal RNA. This Aneura mirabilis (Parasitic liverwort) protein is Small ribosomal subunit protein uS19c.